The following is a 1159-amino-acid chain: Caspase recruitment domain-containing protein 11 (1159 aa).

Residues 18–110 form the CARD domain; it reads EEEALWDNVE…ELYKLVTGKE (93 aa). Residues 111–128 are linker; it reads PTRRFSTIVVEEGHEGLT. Residues 176-449 are a coiled coil; that stretch reads FQERYYKMKE…KDNGSLDQSL (274 aa). Residues 441–496 form a disordered region; the sequence is DNGSLDQSLPRHLPATIISQNLGDTSPRTNGQEADDSSTSEESPEDSKYFLPYHPP. Phosphoserine occurs at positions 448 and 466. Residues 450-671 are inhibitory domain (ID); that stretch reads PRHLPATIIS…GHVRGTGPLV (222 aa). Over residues 457–472 the composition is skewed to polar residues; that stretch reads IISQNLGDTSPRTNGQ. Residues 473 to 484 are compositionally biased toward acidic residues; that stretch reads EADDSSTSEESP. 2 positions are modified to phosphoserine: Ser512 and Ser540. A disordered region spans residues 532–578; that stretch reads HEEDFTDGSPSSSRSLPVTSSFSKMQPHRSRSSIMSITAEPPGNDSI. Over residues 540–554 the composition is skewed to low complexity; that stretch reads SPSSSRSLPVTSSFS. A Phosphoserine; by PKC/PRKCB and PKC/PRKCQ modification is found at Ser564. The residue at position 598 (Ser598) is a Phosphoserine. The segment at 610 to 631 is disordered; that stretch reads NHERYSFGPPSIHSSSSSHQSE. Positions 620–630 are enriched in low complexity; it reads SIHSSSSSHQS. A phosphoserine; by PKC/PRKCB and PKC/PRKCQ mark is found at Ser649 and Ser657. In terms of domain architecture, PDZ spans 672 to 760; it reads QHTTLNGDGL…LITLHYKVNH (89 aa). Phosphoserine occurs at positions 891 and 930. The Guanylate kinase-like domain maps to 978-1145; the sequence is RRRPVLFTPT…LLRVLKDKIV (168 aa).

Homodimer; disulfide-linked. Homomultimer; polymerizes following activation, forming a nucleating helical template that seeds BCL10-filament formation via a CARD-CARD interaction. Interacts (via CARD domain) with BCL10 (via CARD domain); interaction takes place following CARD11 activation and polymerization, leading to the formation of a filamentous CBM complex assembly. Component of a CBM complex (CARD11-BCL10-MALT1) complex involved in NF-kappa-B activation. Found in a membrane raft complex, at least composed of BCL10, CARD11, DPP4 and IKBKB. Interacts (via PDZ domain) with DPP4 (via cytoplasmic tail). Phosphorylation at Ser-564, Ser-649 and Ser-657 by PRKCB and PRKCQ leads to a shift from an inactive to an active form that activates the NF-kappa-B signaling.

Its subcellular location is the cytoplasm. It is found in the membrane raft. Maintained in an autoinhibited state via homodimerization in which the CARD domain forms an extensive interaction with the adjacent linker and coiled-coil regions. Activation downstream of T-cell receptor (TCR) by phosphorylation by PRKCB and PRKCQ triggers CARD11 homooligomerization and BCL10 recruitment, followed by activation of NF-kappa-B. Adapter protein that plays a key role in adaptive immune response by transducing the activation of NF-kappa-B downstream of T-cell receptor (TCR) and B-cell receptor (BCR) engagement. Transduces signals downstream TCR or BCR activation via the formation of a multiprotein complex together with BCL10 and MALT1 that induces NF-kappa-B and MAP kinase p38 (MAPK11, MAPK12, MAPK13 and/or MAPK14) pathways. Upon activation in response to TCR or BCR triggering, CARD11 homooligomerizes to form a nucleating helical template that recruits BCL10 via CARD-CARD interaction, thereby promoting polymerization of BCL10 and subsequent recruitment of MALT1: this leads to I-kappa-B kinase (IKK) phosphorylation and degradation, and release of NF-kappa-B proteins for nuclear translocation. Its binding to DPP4 induces T-cell proliferation and NF-kappa-B activation in a T-cell receptor/CD3-dependent manner. Promotes linear ubiquitination of BCL10 by promoting the targeting of BCL10 to RNF31/HOIP. Stimulates the phosphorylation of BCL10. Also activates the TORC1 signaling pathway. In Mus musculus (Mouse), this protein is Caspase recruitment domain-containing protein 11.